Consider the following 258-residue polypeptide: Uroplakin-1a (258 aa).

Residues methionine 1–proline 14 are Cytoplasmic-facing. The chain crosses the membrane as a helical span at residues valine 15–phenylalanine 35. Residues alanine 36–aspartate 59 lie on the Extracellular side of the membrane. The helical transmembrane segment at valine 60–leucine 86 threads the bilayer. At cysteine 87–serine 91 the chain is on the cytoplasmic side. Residues methionine 92 to isoleucine 112 traverse the membrane as a helical segment. The Extracellular portion of the chain corresponds to threonine 113 to threonine 230. Residue asparagine 170 is glycosylated (N-linked (GlcNAc...) asparagine). The helical transmembrane segment at tryptophan 231–methionine 252 threads the bilayer. Topologically, residues tyrosine 253–leucine 258 are cytoplasmic.

This sequence belongs to the tetraspanin (TM4SF) family. Homodimer; disulfide-linked. Interacts with uroplakin-2 (UPK2). The N-terminus is blocked. In terms of processing, N-glycosylated with high-mannose oligosaccharides. Bladder epithelium.

Its subcellular location is the membrane. In terms of biological role, component of the asymmetric unit membrane (AUM); a highly specialized biomembrane elaborated by terminally differentiated urothelial cells. May play an important role in normal bladder epithelial physiology, possibly in regulating membrane permeability of superficial umbrella cells or in stabilizing the apical membrane through AUM/cytoskeletal interactions. The polypeptide is Uroplakin-1a (UPK1A) (Bos taurus (Bovine)).